Here is a 340-residue protein sequence, read N- to C-terminus: Ketol-acid reductoisomerase (NADP(+)) (340 aa).

Residues methionine 1–threonine 183 enclose the KARI N-terminal Rossmann domain. NADP(+) is bound by residues phenylalanine 26–glutamine 29, serine 54, and aspartate 84–glutamine 87. The active site involves histidine 109. An NADP(+)-binding site is contributed by glycine 135. The region spanning threonine 184–isoleucine 329 is the KARI C-terminal knotted domain. Mg(2+) is bound by residues aspartate 192, glutamate 196, glutamate 228, and glutamate 232. Residue serine 253 participates in substrate binding.

This sequence belongs to the ketol-acid reductoisomerase family. The cofactor is Mg(2+).

It catalyses the reaction (2R)-2,3-dihydroxy-3-methylbutanoate + NADP(+) = (2S)-2-acetolactate + NADPH + H(+). The enzyme catalyses (2R,3R)-2,3-dihydroxy-3-methylpentanoate + NADP(+) = (S)-2-ethyl-2-hydroxy-3-oxobutanoate + NADPH + H(+). It functions in the pathway amino-acid biosynthesis; L-isoleucine biosynthesis; L-isoleucine from 2-oxobutanoate: step 2/4. Its pathway is amino-acid biosynthesis; L-valine biosynthesis; L-valine from pyruvate: step 2/4. In terms of biological role, involved in the biosynthesis of branched-chain amino acids (BCAA). Catalyzes an alkyl-migration followed by a ketol-acid reduction of (S)-2-acetolactate (S2AL) to yield (R)-2,3-dihydroxy-isovalerate. In the isomerase reaction, S2AL is rearranged via a Mg-dependent methyl migration to produce 3-hydroxy-3-methyl-2-ketobutyrate (HMKB). In the reductase reaction, this 2-ketoacid undergoes a metal-dependent reduction by NADPH to yield (R)-2,3-dihydroxy-isovalerate. This chain is Ketol-acid reductoisomerase (NADP(+)), found in Campylobacter fetus subsp. fetus (strain 82-40).